The chain runs to 65 residues: Small, acid-soluble spore protein Tlp (65 aa).

Belongs to the Tlp family.

It is found in the spore core. This is Small, acid-soluble spore protein Tlp from Bacillus anthracis (strain A0248).